We begin with the raw amino-acid sequence, 486 residues long: UDP-N-acetylmuramate--L-alanine ligase (486 aa).

126–132 (GTHGKTS) lines the ATP pocket.

The protein belongs to the MurCDEF family.

The protein localises to the cytoplasm. The catalysed reaction is UDP-N-acetyl-alpha-D-muramate + L-alanine + ATP = UDP-N-acetyl-alpha-D-muramoyl-L-alanine + ADP + phosphate + H(+). Its pathway is cell wall biogenesis; peptidoglycan biosynthesis. Functionally, cell wall formation. This Buchnera aphidicola subsp. Baizongia pistaciae (strain Bp) protein is UDP-N-acetylmuramate--L-alanine ligase.